A 535-amino-acid chain; its full sequence is GMP synthase [glutamine-hydrolyzing] (535 aa).

Residues 4–210 (KILILDFGSQ…VHEICKCKPD (207 aa)) enclose the Glutamine amidotransferase type-1 domain. Residue cysteine 85 is the Nucleophile of the active site. Active-site residues include histidine 184 and glutamate 186. The GMPS ATP-PPase domain maps to 211–403 (WVMGDYIAEA…LGLPREMVYR (193 aa)). 238 to 244 (SGGVDSS) serves as a coordination point for ATP.

As to quaternary structure, homodimer.

It carries out the reaction XMP + L-glutamine + ATP + H2O = GMP + L-glutamate + AMP + diphosphate + 2 H(+). It participates in purine metabolism; GMP biosynthesis; GMP from XMP (L-Gln route): step 1/1. Functionally, catalyzes the synthesis of GMP from XMP. The polypeptide is GMP synthase [glutamine-hydrolyzing] (Polynucleobacter necessarius subsp. necessarius (strain STIR1)).